The chain runs to 349 residues: Nuclear distribution protein nudE homolog 1-A (349 aa).

Positions 22 to 189 form a coiled coil; that stretch reads VAMKYKQCSE…ELAVQQKQEK (168 aa).

The protein belongs to the nudE family. In terms of assembly, self-associates. Interacts with pafah1b1. Post-translationally, phosphorylated in mitosis.

It localises to the cytoplasm. The protein resides in the cytoskeleton. The protein localises to the microtubule organizing center. Its subcellular location is the centrosome. It is found in the spindle. It localises to the chromosome. The protein resides in the centromere. The protein localises to the kinetochore. Its subcellular location is the cleavage furrow. It is found in the cytoplasmic vesicle membrane. Required for centrosome duplication and formation and function of the mitotic spindle. The protein is Nuclear distribution protein nudE homolog 1-A (nde1-a) of Xenopus laevis (African clawed frog).